The sequence spans 427 residues: UPF0597 protein CPF_0803 (427 aa).

Belongs to the UPF0597 family.

In Clostridium perfringens (strain ATCC 13124 / DSM 756 / JCM 1290 / NCIMB 6125 / NCTC 8237 / Type A), this protein is UPF0597 protein CPF_0803.